Here is a 147-residue protein sequence, read N- to C-terminus: uncharacterized protein (147 aa).

Residues 3–23 (APMIGMVVLVVVLGLAVLALS) form a helical membrane-spanning segment.

It to M.leprae ML1147.

Its subcellular location is the membrane. This is an uncharacterized protein from Mycobacterium tuberculosis (strain CDC 1551 / Oshkosh).